A 418-amino-acid polypeptide reads, in one-letter code: MATLIPSFKKDNPFESINDNELIGLTFNDQDGPSNNILWSSSKIVNLIPQGQFQAKQPDAVSGNFAKFGDENNSGQTIDSGILLDDNADPSSNVIWSSEKIAKIPLPPFQLKQLDAVSGNISIFGSDVNLGQVIDSGYSINDSLPPSSQVIWSSNQVQSQLLAVSQAKQPNANAGNLAIFGNGVNNGQAIDSGYSINDLSAPSSNVLYSSGKIYQILPQPQVSFLSGVSPTSTVNPSSNILYVGVDGSSYVWNGSVYNNVFVKSYSKFSSQSPLSVPPGSNISIPFPIVDSSGQSSKGSISISPSGVVTITSLSQASSLYKAKFSGQGLNSGGASIQVSFNFVDQSNQQLGNSSSAFSVSVGGLAINSQCSLEQYFQVPPLGQLSFSVNIVTKLSDPPVILGNVGPIDNPYLIVEQIY.

This is an uncharacterized protein from Invertebrate iridescent virus 6 (IIV-6).